The sequence spans 1320 residues: Phosphoribosylformylglycinamidine synthase (1320 aa).

ATP-binding positions include 310–321 (GAATGSGGEIRD) and Ala-686. The Mg(2+) site is built by Asp-687, Glu-726, Asn-730, and Asp-894. Position 896 (Ser-896) interacts with ATP. The region spanning 1067-1320 (VAILREQGVN…MFRNARAFIG (254 aa)) is the Glutamine amidotransferase type-1 domain. Cys-1160 serves as the catalytic Nucleophile. Active-site residues include His-1285 and Glu-1287.

It in the N-terminal section; belongs to the FGAMS family. Monomer.

It localises to the cytoplasm. It carries out the reaction N(2)-formyl-N(1)-(5-phospho-beta-D-ribosyl)glycinamide + L-glutamine + ATP + H2O = 2-formamido-N(1)-(5-O-phospho-beta-D-ribosyl)acetamidine + L-glutamate + ADP + phosphate + H(+). It functions in the pathway purine metabolism; IMP biosynthesis via de novo pathway; 5-amino-1-(5-phospho-D-ribosyl)imidazole from N(2)-formyl-N(1)-(5-phospho-D-ribosyl)glycinamide: step 1/2. Functionally, phosphoribosylformylglycinamidine synthase involved in the purines biosynthetic pathway. Catalyzes the ATP-dependent conversion of formylglycinamide ribonucleotide (FGAR) and glutamine to yield formylglycinamidine ribonucleotide (FGAM) and glutamate. This is Phosphoribosylformylglycinamidine synthase from Colwellia psychrerythraea (strain 34H / ATCC BAA-681) (Vibrio psychroerythus).